A 225-amino-acid chain; its full sequence is Thymidine kinase (225 aa).

Gly-15 to Thr-22 contributes to the ATP binding site. Residues Lys-85 to Ser-110 are disordered. Polar residues predominate over residues Arg-90–Pro-104. Asp-121–Asn-124 is a binding site for ATP. The Proton acceptor role is filled by Glu-122. 4 residues coordinate Zn(2+): Cys-178, Cys-181, Cys-216, and Cys-219.

The protein belongs to the thymidine kinase family. Homotetramer.

It localises to the cytoplasm. The enzyme catalyses thymidine + ATP = dTMP + ADP + H(+). This Haloquadratum walsbyi (strain DSM 16790 / HBSQ001) protein is Thymidine kinase.